Reading from the N-terminus, the 117-residue chain is Large ribosomal subunit protein bL20 (117 aa).

The protein belongs to the bacterial ribosomal protein bL20 family.

Its function is as follows. Binds directly to 23S ribosomal RNA and is necessary for the in vitro assembly process of the 50S ribosomal subunit. It is not involved in the protein synthesizing functions of that subunit. The chain is Large ribosomal subunit protein bL20 from Oleidesulfovibrio alaskensis (strain ATCC BAA-1058 / DSM 17464 / G20) (Desulfovibrio alaskensis).